Consider the following 147-residue polypeptide: Large ribosomal subunit protein uL15 (147 aa).

The interval 1–57 (MKLHELKSAPKSRNHKAKVVGRGHGSGLGKTSGRGQKGQKARKSGRTRPGFEGGQTP) is disordered. The span at 10–21 (PKSRNHKAKVVG) shows a compositional bias: basic residues. Residues 22-36 (RGHGSGLGKTSGRGQ) show a composition bias toward gly residues. Positions 37-46 (KGQKARKSGR) are enriched in basic residues.

This sequence belongs to the universal ribosomal protein uL15 family. Part of the 50S ribosomal subunit.

Binds to the 23S rRNA. This Mycoplasmoides gallisepticum (strain R(low / passage 15 / clone 2)) (Mycoplasma gallisepticum) protein is Large ribosomal subunit protein uL15.